A 1061-amino-acid polypeptide reads, in one-letter code: E3 SUMO-protein ligase ZNF451 (1061 aa).

The disordered stretch occupies residues 1–38 (MGDPGSEIIESVPPAGPEASESTTDENEDDIQFVSEGP). The tract at residues 1–246 (MGDPGSEIIE…TDDGHNNNLL (246 aa)) is sufficient for E3 SUMO-protein ligase activity. Positions 1–344 (MGDPGSEIIE…RVHCRNAGPV (344 aa)) are important for interaction with SUMO1 and SUMO2. The interaction with SUMO2 1 stretch occupies residues 30–37 (DIQFVSEG). Positions 38–41 (PLRP) match the PLRP motif. Positions 42-50 (VLEYIDLVS) are interaction with SUMO2 2. Residues K75, K77, K106, I121, A130, L138, K139, K144, and K153 each participate in a glycyl lysine isopeptide (Lys-Gly) (interchain with G-Cter in SUMO2) cross-link. At S155 the chain carries Phosphoserine. Position 158 is an omega-N-methylarginine (R158). Residues V164 and K167 each participate in a glycyl lysine isopeptide (Lys-Gly) (interchain with G-Cter in SUMO2) cross-link. Positions 168 to 525 (PILCPIMHCN…HMSRIHGGAH (358 aa)) are important for interaction with SMAD4. The C2H2-type 1 zinc-finger motif lies at 169–195 (ILCPIMHCNKEFDNGHLLLGHLKRFDH). Glycyl lysine isopeptide (Lys-Gly) (interchain with G-Cter in SUMO2) cross-links involve residues Q226, G240, P247, S263, K270, K275, K283, D286, K288, P293, K301, and K309. The C2H2-type 2 zinc-finger motif lies at 253–277 (FACPNCFLLFSRKEECSKHMSGKNH). Residues 315-337 (VKCVACHKTLRSHMELTAHFRVH) form a C2H2-type 3 zinc finger. Residue K357 forms a Glycyl lysine isopeptide (Lys-Gly) (interchain with G-Cter in SUMO2) linkage. The C2H2-type 4 zinc finger occupies 362–386 (GYCPDCNQVFVDETSTQNHKQNSGH). K423 is covalently cross-linked (Glycyl lysine isopeptide (Lys-Gly) (interchain with G-Cter in SUMO2)). S432 carries the post-translational modification Phosphoserine. Glycyl lysine isopeptide (Lys-Gly) (interchain with G-Cter in SUMO2) cross-links involve residues K434, K446, K452, K454, K464, F473, V490, C500, K505, D508, G522, W532, K543, and K585. A C2H2-type 5 zinc finger spans residues 498-521 (YKCVVCGKVCDDSGVIRLHMSRIH). The C2H2-type 6 zinc-finger motif lies at 531–554 (FWCRTCKKELTRKDTIMAHVTEFH). A C2H2-type 7; atypical zinc finger spans residues 606 to 631 (WQCRICEDMFDSQEYVKQHCMSLASH). Glycyl lysine isopeptide (Lys-Gly) (interchain with G-Cter in SUMO2) cross-links involve residues K632, K647, and K664. The C2H2-type 8 zinc-finger motif lies at 636-659 (YSCAHCRKPFHKIETLYRHCQDEH). A C2H2-type 9 zinc finger spans residues 667–690 (YFCGLCDLIFNVEEAFLSHYEEHH). A Glycyl lysine isopeptide (Lys-Gly) (interchain with G-Cter in SUMO1); alternate cross-link involves residue K706. K706 participates in a covalent cross-link: Glycyl lysine isopeptide (Lys-Gly) (interchain with G-Cter in SUMO2); alternate. Residues K731 and K748 each participate in a glycyl lysine isopeptide (Lys-Gly) (interchain with G-Cter in SUMO2) cross-link. The C2H2-type 10 zinc-finger motif lies at 753–776 (FRCSLCSATAQNLTDMNTHIHQVH). Residues K777, K779, K790, K817, K827, K832, K843, K845, K852, K951, K992, and K993 each participate in a glycyl lysine isopeptide (Lys-Gly) (interchain with G-Cter in SUMO2) cross-link. A C2H2-type 11 zinc finger spans residues 789-812 (IKCGTCTKAFHDPESAQQHFHRKH). The segment at 1050 to 1061 (LEEAIRRSLEEM) is important for ubiquitin binding.

This sequence belongs to the krueppel C2H2-type zinc-finger protein family. In terms of assembly, homooligomer. Interacts (via N-terminal region) with SUMO1. Interacts (via N-terminal region) with SUMO2. Interacts simultaneously with two SUMO2 chains. Identified in a complex with SUMO2 and UBE2I/UBC9, where one ZNF451 interacts with one UBE2I/UBC9 and two SUMO2 chains, one bound to the UBE2I/UBC9 active site and the other to another region of the same UBE2I/UBC9 molecule. Interacts (via C-terminus) with ubiquitin. Interacts (via N-terminal zinc-finger domains) with SMAD4 (via MH2 domain). Interacts with SMAD2 and SMAD3. Identified in a complex that contains at least ZNF451, SMAD2, SMAD3 and SMAD4. Interacts with EP300. Inhibits interaction between EP300 and the SMAD4 complex. Interacts with SIMC1. Post-translationally, sumoylated. Predominantly sumoylated on the N-terminal region that is important for interaction with SUMO1 and SUMO2. Sumoylation is important for localization in nuclear granules; desumoylation leads to diffuse nucleoplasmic location. Autosumoylated (in vitro). Sumoylation enhances E3 SUMO-protein ligase activity.

The protein resides in the nucleus. The protein localises to the PML body. It is found in the nucleoplasm. It participates in protein modification; protein sumoylation. In terms of biological role, E3 SUMO-protein ligase; has a preference for SUMO2 and SUMO3 and facilitates UBE2I/UBC9-mediated sumoylation of target proteins. Plays a role in protein SUMO2 modification in response to stress caused by DNA damage and by proteasome inhibitors (in vitro). Required for MCM4 sumoylation. Has no activity with SUMO1. Preferentially transfers an additional SUMO2 chain onto the SUMO2 consensus site 'Lys-11'. Negatively regulates transcriptional activation mediated by the SMAD4 complex in response to TGF-beta signaling. Inhibits EP300-mediated acetylation of histone H3 at 'Lys-9'. Plays a role in regulating the transcription of AR targets. This Homo sapiens (Human) protein is E3 SUMO-protein ligase ZNF451 (ZNF451).